Reading from the N-terminus, the 536-residue chain is Cytochrome P450 monooxygenase fscF (536 aa).

The chain crosses the membrane as a helical span at residues 9-29 (VSWLCALFTAIALYCIAVAFY). Residue C464 coordinates heme.

This sequence belongs to the cytochrome P450 family. The cofactor is heme.

Its subcellular location is the membrane. It functions in the pathway secondary metabolite biosynthesis. Its function is as follows. Cytochrome P450 monooxygenase; part of the fragmented gene cluster that mediates the biosynthesis of fusarochromene, a tryptophan-derived metabolite closely related to a group of mycotoxins including fusarochromanone. Within the pathway, fscF catalyzes the epoxidation of desacetylfusarochromene which opens the way to the production of fusarochromanones. The first step of the pathway is the epimerization of L-tryptophan to D-tryptophan in the presence of the NRPS-like tryptophan epimerase fscC. D-tryptophan is subsequently hydroxylated by the tryptophan 6-hydroxylase fscE to yield 6-hydroxytryptophan. The pyrrole ring undergoes cleavaged by the tryptophan 2,3-dioxygenase fscD and is finally converted to 4-hydroxykyrunenine by the hydrolase fscH. The NRPS-like oxidoreductase fscA reduces the carboxyl group to primary alcohol and the DMATS-type prenyltransferase fscG performs prenylation, followed by the formation of a chromene ring catalyzed by the oxidoreductase fscI, which leads to desacetylfusarochromene. Epoxidation by fscF and rearrangement reactions of chromene double bonds convert compound desacetylfusarochromene to fusarochromanones. Although specific acetyltransferases were not found near the fsc gene cluster, several predicted enzymes containing the N-acetyltransferase superfamily domain are present in the genome of F.equiseti. These predicted enzymes may have the potential to convert desacetylfusarochromene to fusarochromene. This chain is Cytochrome P450 monooxygenase fscF, found in Fusarium equiseti (Fusarium scirpi).